The primary structure comprises 130 residues: UPF0102 protein RSc3265 (130 aa).

Belongs to the UPF0102 family.

This is UPF0102 protein RSc3265 from Ralstonia nicotianae (strain ATCC BAA-1114 / GMI1000) (Ralstonia solanacearum).